A 256-amino-acid chain; its full sequence is Triosephosphate isomerase (256 aa).

9–11 (NWK) is a binding site for substrate. The active-site Electrophile is the histidine 94. Glutamate 166 functions as the Proton acceptor in the catalytic mechanism. Residues glycine 172, serine 211, and 232 to 233 (GG) each bind substrate.

Belongs to the triosephosphate isomerase family. In terms of assembly, homodimer.

The protein localises to the cytoplasm. The enzyme catalyses D-glyceraldehyde 3-phosphate = dihydroxyacetone phosphate. The protein operates within carbohydrate biosynthesis; gluconeogenesis. It functions in the pathway carbohydrate degradation; glycolysis; D-glyceraldehyde 3-phosphate from glycerone phosphate: step 1/1. Functionally, involved in the gluconeogenesis. Catalyzes stereospecifically the conversion of dihydroxyacetone phosphate (DHAP) to D-glyceraldehyde-3-phosphate (G3P). The sequence is that of Triosephosphate isomerase from Natranaerobius thermophilus (strain ATCC BAA-1301 / DSM 18059 / JW/NM-WN-LF).